We begin with the raw amino-acid sequence, 234 residues long: 2,3-bisphosphoglycerate-dependent phosphoglycerate mutase (234 aa).

Substrate contacts are provided by residues 10-17 (RHGSSIWN), 23-24 (TG), arginine 62, 89-92 (ERHY), lysine 100, 116-117 (RR), and 186-187 (GN). Histidine 11 serves as the catalytic Tele-phosphohistidine intermediate. Glutamate 89 (proton donor/acceptor) is an active-site residue.

The protein belongs to the phosphoglycerate mutase family. BPG-dependent PGAM subfamily. In terms of assembly, homodimer.

It catalyses the reaction (2R)-2-phosphoglycerate = (2R)-3-phosphoglycerate. It functions in the pathway carbohydrate degradation; glycolysis; pyruvate from D-glyceraldehyde 3-phosphate: step 3/5. Its function is as follows. Catalyzes the interconversion of 2-phosphoglycerate and 3-phosphoglycerate. This is 2,3-bisphosphoglycerate-dependent phosphoglycerate mutase from Wigglesworthia glossinidia brevipalpis.